Here is a 163-residue protein sequence, read N- to C-terminus: Large ribosomal subunit protein uL11 (163 aa).

Residues 1 to 25 form a disordered region; sequence MAGTIEVLVAGGQADPGPPLGPELG.

This sequence belongs to the universal ribosomal protein uL11 family. In terms of assembly, part of the ribosomal stalk of the 50S ribosomal subunit. Interacts with L10 and the large rRNA to form the base of the stalk. L10 forms an elongated spine to which L12 dimers bind in a sequential fashion forming a multimeric L10(L12)X complex.

Its function is as follows. Forms part of the ribosomal stalk which helps the ribosome interact with GTP-bound translation factors. This Natronomonas pharaonis (strain ATCC 35678 / DSM 2160 / CIP 103997 / JCM 8858 / NBRC 14720 / NCIMB 2260 / Gabara) (Halobacterium pharaonis) protein is Large ribosomal subunit protein uL11.